The chain runs to 311 residues: Methionyl-tRNA formyltransferase (311 aa).

A (6S)-5,6,7,8-tetrahydrofolate-binding site is contributed by 111-114; that stretch reads SLLP.

Belongs to the Fmt family.

It carries out the reaction L-methionyl-tRNA(fMet) + (6R)-10-formyltetrahydrofolate = N-formyl-L-methionyl-tRNA(fMet) + (6S)-5,6,7,8-tetrahydrofolate + H(+). Functionally, attaches a formyl group to the free amino group of methionyl-tRNA(fMet). The formyl group appears to play a dual role in the initiator identity of N-formylmethionyl-tRNA by promoting its recognition by IF2 and preventing the misappropriation of this tRNA by the elongation apparatus. This chain is Methionyl-tRNA formyltransferase, found in Caldicellulosiruptor saccharolyticus (strain ATCC 43494 / DSM 8903 / Tp8T 6331).